Consider the following 1321-residue polypeptide: Bile salt export pump (1321 aa).

At 1-62 the chain is on the cytoplasmic side; the sequence is MSDSVILRSI…FSSSTDIWLM (62 aa). The disordered stretch occupies residues 16–37; that stretch reads ENDGFESDKSYNNDKKSRLQDE. Basic and acidic residues predominate over residues 21–37; it reads ESDKSYNNDKKSRLQDE. Positions 62 to 385 constitute an ABC transmembrane type-1 1 domain; that stretch reads MFVGSLCAFL…ASPCLEAFAT (324 aa). The chain crosses the membrane as a helical span at residues 63 to 83; the sequence is FVGSLCAFLHGIAQPGVLLIF. Topologically, residues 84-147 are extracellular; that stretch reads GTMTDVFIDY…MIKFASYYAG (64 aa). N109, N116, N122, and N125 each carry an N-linked (GlcNAc...) asparagine glycan. Residues 148–168 form a helical membrane-spanning segment; sequence IAVAVLITGYIQICFWVIAAA. Topologically, residues 169 to 215 are cytoplasmic; that stretch reads RQIQKMRKFYFRRIMRMEIGWFDCNSVGELNTRFSDDINKINDAIAD. A helical membrane pass occupies residues 216-236; the sequence is QMALFIQRMTSTICGFLLGFF. Topologically, residues 237–240 are extracellular; that stretch reads RGWK. Residues 241–261 form a helical membrane-spanning segment; it reads LTLVIISVSPLIGIGAATIGL. At 262–319 the chain is on the cytoplasmic side; sequence SVSKFTDYELKAYAKAGVVADEVISSMRTVAAFGGEKREVERYEKNLVFAQRWGIRKG. A helical membrane pass occupies residues 320 to 340; it reads IVMGFFTGFVWCLIFLCYALA. Residues 341–353 lie on the Extracellular side of the membrane; that stretch reads FWYGSTLVLDEGE. A helical membrane pass occupies residues 354 to 374; that stretch reads YTPGTLVQIFLSVIVGALNLG. The Cytoplasmic segment spans residues 375-755; that stretch reads NASPCLEAFA…KFSAPEWPYM (381 aa). The region spanning 420–656 is the ABC transporter 1 domain; it reads IEFHNVTFHY…KGVYFTLVTL (237 aa). 455–462 serves as a coordination point for ATP; it reads GPSGAGKS. The residue at position 586 (T586) is a Phosphothreonine. S587 carries the phosphoserine modification. The interval 651–672 is interaction with HAX1; that stretch reads FTLVTLQSQGNQALNEEDIKDA. A phosphoserine mark is found at S690, S701, and S704. The 289-residue stretch at 755-1043 folds into the ABC transmembrane type-1 2 domain; it reads MLVGSVGAAV…AFSYTPSYAK (289 aa). Residues 756–776 form a helical membrane-spanning segment; that stretch reads LVGSVGAAVNGTVTPLYAFLF. Residues 777–794 lie on the Extracellular side of the membrane; that stretch reads SQILGTFSIPDKEEQRSQ. Residues 795–815 form a helical membrane-spanning segment; that stretch reads INGVCLLFVAMGCVSLFTQFL. Residues 816–869 lie on the Cytoplasmic side of the membrane; it reads QGYAFAKSGELLTKRLRKFGFRAMLGQDIAWFDDLRNSPGALTTRLATDASQVQ. The next 2 helical transmembrane spans lie at 870–890 and 891–911; these read GAAGSQIGMIVNSFTNVTVAM and IIAFSFSWKLSLVILCFFPFL. The Cytoplasmic portion of the chain corresponds to 912-979; that stretch reads ALSGATQTRM…PFKTAIQKAN (68 aa). Residues 980 to 1000 traverse the membrane as a helical segment; sequence IYGFCFAFAQCIMFIANSASY. Residues 1001–1011 lie on the Extracellular side of the membrane; sequence RYGGYLISNEG. The helical transmembrane segment at 1012–1032 threads the bilayer; the sequence is LHFSYVFRVISAVVLSATALG. Residues 1033–1321 are Cytoplasmic-facing; it reads RAFSYTPSYA…KLVTTGSPIS (289 aa). One can recognise an ABC transporter 2 domain in the interval 1078-1316; it reads IDFVDCKFTY…KGAYYKLVTT (239 aa). 1113–1120 provides a ligand contact to ATP; the sequence is GSSGCGKS. Residue S1214 is modified to Phosphoserine. The tract at residues 1311–1314 is mediates internalization from the plasma membrane; sequence YKLV. A Phosphoserine modification is found at S1321.

This sequence belongs to the ABC transporter superfamily. ABCB family. Multidrug resistance exporter (TC 3.A.1.201) subfamily. In terms of assembly, interacts with HAX1. Interacts with the adapter protein complex 2 (AP-2) throught AP2A2 or AP2A1; this interaction regulates cell membrane expression of ABCB11 through its internalization in a clathrin-dependent manner and its subsequent degradation. In terms of processing, N-glycosylated. Post-translationally, ubiquitinated; short-chain ubiquitination regulates cell-Surface expression of ABCB11. In terms of tissue distribution, expressed predominantly, if not exclusively in the liver, where it was further localized to the canalicular microvilli and to subcanalicular vesicles of the hepatocytes by in situ.

The protein localises to the apical cell membrane. The protein resides in the recycling endosome membrane. Its subcellular location is the endosome. It is found in the cell membrane. The catalysed reaction is cholate(in) + ATP + H2O = cholate(out) + ADP + phosphate + H(+). The enzyme catalyses taurocholate(in) + ATP + H2O = taurocholate(out) + ADP + phosphate + H(+). It carries out the reaction glycocholate(in) + ATP + H2O = glycocholate(out) + ADP + phosphate + H(+). It catalyses the reaction glycochenodeoxycholate(in) + ATP + H2O = glycochenodeoxycholate(out) + ADP + phosphate + H(+). The catalysed reaction is taurochenodeoxycholate(in) + ATP + H2O = taurochenodeoxycholate(out) + ADP + phosphate + H(+). The enzyme catalyses glycoursodeoxycholate(in) + ATP + H2O = glycoursodeoxycholate(out) + ADP + phosphate + H(+). It carries out the reaction tauroursodeoxycholate(in) + ATP + H2O = tauroursodeoxycholate(out) + ADP + phosphate + H(+). It catalyses the reaction taurodeoxycholate(in) + ATP + H2O = taurodeoxycholate(out) + ADP + phosphate + H(+). The catalysed reaction is taurolithocholate 3-sulfate(in) + ATP + H2O = taurolithocholate 3-sulfate(out) + ADP + phosphate + H(+). The enzyme catalyses pravastatin(in) + ATP + H2O = pravastatin(out) + ADP + phosphate + H(+). Its activity is regulated as follows. The uptake of taurocholate is inhibited by taurolithocholate sulfate with an IC(50) of 9 uM. Pravastatin competitively inhibits the transport of taurocholic acid. Cyclosporin A, glibenclamide, rifampicin and troglitazonestrongly competitively inhibit the transport activity of taurocholate. The canalicular transport activity of taurocholate is strongly dependent on canalicular membrane cholesterol content. The uptake of taurocholate is increased by short- and medium-chain fatty acids. Cholesterol increases transport capacity of taurocholate without affecting the affinity for the substrate. Functionally, catalyzes the transport of the major hydrophobic bile salts, such as taurine and glycine-conjugated cholic acid across the canalicular membrane of hepatocytes in an ATP-dependent manner, therefore participates in hepatic bile acid homeostasis and consequently to lipid homeostasis through regulation of biliary lipid secretion in a bile salts dependent manner. Transports taurine-conjugated bile salts more rapidly than glycine-conjugated bile salts. Also transports non-bile acid compounds, such as pravastatin and fexofenadine in an ATP-dependent manner and may be involved in their biliary excretion. This Homo sapiens (Human) protein is Bile salt export pump.